The sequence spans 113 residues: uncharacterized protein (113 aa).

This is an uncharacterized protein from Haemophilus influenzae (strain ATCC 51907 / DSM 11121 / KW20 / Rd).